The primary structure comprises 183 residues: Probable transcription termination protein NusA (183 aa).

Residues 32 to 98 (DERVAFIVKE…DDVWVKRVGK (67 aa)) form the KH domain. The interval 149–183 (RKRAKRPVVKDQQQEQTETKQETDVQQDVKETVKE) is disordered. The segment covering 156–183 (VVKDQQQEQTETKQETDVQQDVKETVKE) has biased composition (basic and acidic residues).

It belongs to the NusA family.

The protein resides in the cytoplasm. Participates in transcription termination. The chain is Probable transcription termination protein NusA from Methanocaldococcus jannaschii (strain ATCC 43067 / DSM 2661 / JAL-1 / JCM 10045 / NBRC 100440) (Methanococcus jannaschii).